Consider the following 344-residue polypeptide: Dihydroorotase (344 aa).

Histidine 13 and histidine 15 together coordinate Zn(2+). Substrate is bound by residues 15–17 (HLR) and asparagine 41. Zn(2+)-binding residues include lysine 98, histidine 135, and histidine 173. Lysine 98 bears the N6-carboxylysine mark. Histidine 135 provides a ligand contact to substrate. Leucine 218 lines the substrate pocket. Residue aspartate 247 participates in Zn(2+) binding. Aspartate 247 is a catalytic residue. Substrate-binding residues include histidine 251 and alanine 263.

It belongs to the metallo-dependent hydrolases superfamily. DHOase family. Class II DHOase subfamily. In terms of assembly, homodimer. Requires Zn(2+) as cofactor.

The catalysed reaction is (S)-dihydroorotate + H2O = N-carbamoyl-L-aspartate + H(+). It participates in pyrimidine metabolism; UMP biosynthesis via de novo pathway; (S)-dihydroorotate from bicarbonate: step 3/3. In terms of biological role, catalyzes the reversible cyclization of carbamoyl aspartate to dihydroorotate. This chain is Dihydroorotase, found in Neisseria meningitidis serogroup C (strain 053442).